A 118-amino-acid polypeptide reads, in one-letter code: Large ribosomal subunit protein bL19 (118 aa).

Belongs to the bacterial ribosomal protein bL19 family.

Its function is as follows. This protein is located at the 30S-50S ribosomal subunit interface and may play a role in the structure and function of the aminoacyl-tRNA binding site. In Citrifermentans bemidjiense (strain ATCC BAA-1014 / DSM 16622 / JCM 12645 / Bem) (Geobacter bemidjiensis), this protein is Large ribosomal subunit protein bL19.